We begin with the raw amino-acid sequence, 414 residues long: Esterase FrsA (414 aa).

It belongs to the FrsA family.

It carries out the reaction a carboxylic ester + H2O = an alcohol + a carboxylate + H(+). Functionally, catalyzes the hydrolysis of esters. In Salmonella agona (strain SL483), this protein is Esterase FrsA.